We begin with the raw amino-acid sequence, 243 residues long: GTP cyclohydrolase 1 type 2 (243 aa).

The a divalent metal cation site is built by H63, H64, D102, H209, and E213.

It belongs to the GTP cyclohydrolase I type 2/NIF3 family. As to quaternary structure, homohexamer.

It catalyses the reaction GTP + H2O = 7,8-dihydroneopterin 3'-triphosphate + formate + H(+). The protein operates within cofactor biosynthesis; 7,8-dihydroneopterin triphosphate biosynthesis; 7,8-dihydroneopterin triphosphate from GTP: step 1/1. Its function is as follows. Converts GTP to dihydroneopterin triphosphate. This chain is GTP cyclohydrolase 1 type 2, found in Helicobacter pylori (strain J99 / ATCC 700824) (Campylobacter pylori J99).